The following is a 343-amino-acid chain: N-acetyl-gamma-glutamyl-phosphate reductase (343 aa).

Residue Cys-150 is part of the active site.

This sequence belongs to the NAGSA dehydrogenase family. Type 1 subfamily.

Its subcellular location is the cytoplasm. The enzyme catalyses N-acetyl-L-glutamate 5-semialdehyde + phosphate + NADP(+) = N-acetyl-L-glutamyl 5-phosphate + NADPH + H(+). It participates in amino-acid biosynthesis; L-arginine biosynthesis; N(2)-acetyl-L-ornithine from L-glutamate: step 3/4. Catalyzes the NADPH-dependent reduction of N-acetyl-5-glutamyl phosphate to yield N-acetyl-L-glutamate 5-semialdehyde. The chain is N-acetyl-gamma-glutamyl-phosphate reductase from Nitrosococcus oceani (strain ATCC 19707 / BCRC 17464 / JCM 30415 / NCIMB 11848 / C-107).